The following is a 109-amino-acid chain: Aquaporin-2 (109 aa).

Residues 1-6 are Cytoplasmic-facing; it reads SIAFSK. The chain crosses the membrane as a helical span at residues 7–27; the sequence is AVFSEFLATLLFVFFGLGSAL. Residues 28–35 are Extracellular-facing; sequence NWPQALPS. A helical membrane pass occupies residues 36 to 54; sequence GLQIAMAFGLAIGTLVQTL. Residues 55-59 lie on the Cytoplasmic side of the membrane; the sequence is GHISG. The discontinuously helical intramembrane region spans 60–69; it reads AHINPAVTVA. An NPA 1 motif is present at residues 63 to 65; it reads NPA. The Cytoplasmic segment spans residues 70–80; it reads CLVGCHVSFLR. Residues 81-102 form a helical membrane-spanning segment; it reads AIFYVAAQLLGAVAGAALLHEL. Topologically, residues 103 to 109 are extracellular; the sequence is TPPDIRG.

It belongs to the MIP/aquaporin (TC 1.A.8) family. In terms of assembly, homotetramer. Serine phosphorylation is necessary and sufficient for expression at the apical membrane. Endocytosis is not phosphorylation-dependent. Post-translationally, N-glycosylated.

The protein localises to the apical cell membrane. It localises to the basolateral cell membrane. It is found in the cell membrane. Its subcellular location is the cytoplasmic vesicle membrane. The protein resides in the golgi apparatus. The protein localises to the trans-Golgi network membrane. The enzyme catalyses H2O(in) = H2O(out). It carries out the reaction glycerol(in) = glycerol(out). Functionally, forms a water-specific channel that provides the plasma membranes of renal collecting duct with high permeability to water, thereby permitting water to move in the direction of an osmotic gradient. Plays an essential role in renal water homeostasis. Could also be permeable to glycerol. The polypeptide is Aquaporin-2 (Orycteropus afer (Aardvark)).